Here is a 203-residue protein sequence, read N- to C-terminus: GTP cyclohydrolase-2 (203 aa).

49 to 53 provides a ligand contact to GTP; the sequence is RIHSE. The Zn(2+) site is built by cysteine 54, cysteine 65, and cysteine 67. Residues glutamine 70, 92–94, and threonine 114 each bind GTP; that span reads EGR. Aspartate 126 serves as the catalytic Proton acceptor. Arginine 128 (nucleophile) is an active-site residue. The GTP site is built by threonine 149 and lysine 154.

It belongs to the GTP cyclohydrolase II family. The cofactor is Zn(2+).

It catalyses the reaction GTP + 4 H2O = 2,5-diamino-6-hydroxy-4-(5-phosphoribosylamino)-pyrimidine + formate + 2 phosphate + 3 H(+). It functions in the pathway cofactor biosynthesis; riboflavin biosynthesis; 5-amino-6-(D-ribitylamino)uracil from GTP: step 1/4. Its function is as follows. Catalyzes the conversion of GTP to 2,5-diamino-6-ribosylamino-4(3H)-pyrimidinone 5'-phosphate (DARP), formate and pyrophosphate. This is GTP cyclohydrolase-2 from Shewanella sp. (strain MR-7).